A 593-amino-acid chain; its full sequence is Methionine--tRNA ligase (593 aa).

The 'HIGH' region motif lies at 7-17; it reads PYANGPRHIGH. Zn(2+) is bound by residues cysteine 139, cysteine 142, cysteine 152, and cysteine 155. Residues 343–347 carry the 'KMSKS' region motif; sequence KFSTS. Threonine 346 provides a ligand contact to ATP.

This sequence belongs to the class-I aminoacyl-tRNA synthetase family. MetG type 1 subfamily. In terms of assembly, monomer. It depends on Zn(2+) as a cofactor.

It localises to the cytoplasm. The catalysed reaction is tRNA(Met) + L-methionine + ATP = L-methionyl-tRNA(Met) + AMP + diphosphate. Functionally, is required not only for elongation of protein synthesis but also for the initiation of all mRNA translation through initiator tRNA(fMet) aminoacylation. In Saccharopolyspora erythraea (strain ATCC 11635 / DSM 40517 / JCM 4748 / NBRC 13426 / NCIMB 8594 / NRRL 2338), this protein is Methionine--tRNA ligase.